The primary structure comprises 237 residues: Phosphoribosylaminoimidazole-succinocarboxamide synthase (237 aa).

The protein belongs to the SAICAR synthetase family.

It carries out the reaction 5-amino-1-(5-phospho-D-ribosyl)imidazole-4-carboxylate + L-aspartate + ATP = (2S)-2-[5-amino-1-(5-phospho-beta-D-ribosyl)imidazole-4-carboxamido]succinate + ADP + phosphate + 2 H(+). It functions in the pathway purine metabolism; IMP biosynthesis via de novo pathway; 5-amino-1-(5-phospho-D-ribosyl)imidazole-4-carboxamide from 5-amino-1-(5-phospho-D-ribosyl)imidazole-4-carboxylate: step 1/2. The chain is Phosphoribosylaminoimidazole-succinocarboxamide synthase from Hamiltonella defensa subsp. Acyrthosiphon pisum (strain 5AT).